A 277-amino-acid chain; its full sequence is S-formylglutathione hydrolase FrmB (277 aa).

Active-site charge relay system residues include Ser145, Asp221, and His254.

It belongs to the esterase D family.

It carries out the reaction S-formylglutathione + H2O = formate + glutathione + H(+). Its function is as follows. Serine hydrolase involved in the detoxification of formaldehyde. Hydrolyzes S-formylglutathione to glutathione and formate. The sequence is that of S-formylglutathione hydrolase FrmB (frmB) from Escherichia coli O139:H28 (strain E24377A / ETEC).